The primary structure comprises 149 residues: Large ribosomal subunit protein bL9 (149 aa).

This sequence belongs to the bacterial ribosomal protein bL9 family.

Functionally, binds to the 23S rRNA. The sequence is that of Large ribosomal subunit protein bL9 from Salmonella agona (strain SL483).